A 763-amino-acid chain; its full sequence is Formin-like protein 4 (763 aa).

The N-terminal stretch at 1–33 is a signal peptide; it reads MAAMLMQPWPPFLPHLTLVFLTLILFFPNQSFS. The interval 52–73 is disordered; the sequence is PPVQSPVLSPPQNPSSSSSDSD. A helical transmembrane segment spans residues 80 to 100; sequence AVLITAASTLLVAAVFFFLVH. 2 disordered regions span residues 185–327 and 726–763; these read IYSK…DSDH and RSSMGSTQQRNAVKFPVLPPNFMSDRSRSDSGGSDSDM. Positions 205–225 are enriched in polar residues; it reads RSSTSHSVIHNDNYRNATTTH. Basic and acidic residues predominate over residues 229-238; sequence VKTDSFEFVK. Positions 240-280 are enriched in pro residues; that stretch reads DPTPPPPPPPPIPVKQSATPPPPPPPKLKNNGPSPPPPPPL. Residues 281–292 are compositionally biased toward low complexity; that stretch reads KKTAALSSSASK. One can recognise an FH2 domain in the interval 303 to 738; sequence SGESSNGQVK…MGSTQQRNAV (436 aa). Basic and acidic residues predominate over residues 316–327; that stretch reads LHWDKVNPDSDH. Polar residues predominate over residues 726–736; that stretch reads RSSMGSTQQRN.

Belongs to the formin-like family. Class-I subfamily. Interacts with profilin. Expressed in the whole plant (at protein level).

The protein resides in the cell membrane. Functionally, might be involved in the organization and polarity of the actin cytoskeleton. The protein is Formin-like protein 4 (FH4) of Arabidopsis thaliana (Mouse-ear cress).